A 655-amino-acid polypeptide reads, in one-letter code: Import motor subunit, mitochondrial (655 aa).

Residues 1–23 (MLAAKNILNRSSLSSSFRIATRL) constitute a mitochondrion transit peptide. Thr330 bears the Phosphothreonine mark. The segment at 629-655 (EQLYKNDSNNNNNNNNGNNAESDETKQ) is disordered. The segment covering 637-647 (NNNNNNNNGNN) has biased composition (low complexity).

This sequence belongs to the heat shock protein 70 family. As to quaternary structure, component of the PAM complex, at least composed of SSC1 (mtHsp70), MGE1, TIM44, PAM16/TIM16, PAM17 and PAM18/TIM14. In the complex, SSC1 interacts directly with PAM18 and TIM44. Interacts with NAP1. Component of endonuclease SceI (endo.SceI), which is a heterodimer of ENS2 and SSC1.

It is found in the mitochondrion matrix. The catalysed reaction is ATP + H2O = ADP + phosphate + H(+). In terms of biological role, essential component of the PAM complex, a complex required for the translocation of transit peptide-containing proteins from the inner membrane into the mitochondrial matrix in an ATP-dependent manner. Constitutes the ATP-driven core of the motor and binds the precursor preprotein. Required for the import of the processed frataxin homolog YFH1 into the mitochondrion. Acts as a non-catalytic component of endonuclease SceI (endo.SceI), which cleaves specifically at multiple sites on mitochondrial DNA and produces double-stranded breaks. SSC1 confers broader sequence specificity, greater stability, and higher activity on the catalytic subunit. This is Import motor subunit, mitochondrial from Saccharomyces cerevisiae (Baker's yeast).